We begin with the raw amino-acid sequence, 460 residues long: Kynureninase (460 aa).

Pyridoxal 5'-phosphate contacts are provided by residues leucine 127, threonine 128, 165 to 168, aspartate 249, histidine 252, and tyrosine 274; that span reads FPSD. N6-(pyridoxal phosphate)lysine is present on lysine 275. Pyridoxal 5'-phosphate is bound by residues tryptophan 304 and asparagine 332.

It belongs to the kynureninase family. In terms of assembly, homodimer. It depends on pyridoxal 5'-phosphate as a cofactor.

It is found in the cytoplasm. The catalysed reaction is L-kynurenine + H2O = anthranilate + L-alanine + H(+). It carries out the reaction 3-hydroxy-L-kynurenine + H2O = 3-hydroxyanthranilate + L-alanine + H(+). The protein operates within amino-acid degradation; L-kynurenine degradation; L-alanine and anthranilate from L-kynurenine: step 1/1. Its pathway is cofactor biosynthesis; NAD(+) biosynthesis; quinolinate from L-kynurenine: step 2/3. Its function is as follows. Catalyzes the cleavage of L-kynurenine (L-Kyn) and L-3-hydroxykynurenine (L-3OHKyn) into anthranilic acid (AA) and 3-hydroxyanthranilic acid (3-OHAA), respectively. This Monosiga brevicollis (Choanoflagellate) protein is Kynureninase.